Reading from the N-terminus, the 535-residue chain is CTP synthase (535 aa).

The amidoligase domain stretch occupies residues 1–268 (MSTKYIFVTG…DQIVCDHLKL (268 aa)). Ser-14 lines the CTP pocket. Residue Ser-14 participates in UTP binding. Position 15–20 (15–20 (SMGKGI)) interacts with ATP. An L-glutamine-binding site is contributed by Tyr-55. Asp-72 contacts ATP. Positions 72 and 142 each coordinate Mg(2+). Residues 149–151 (DME), 189–194 (KTKIAQ), and Lys-225 contribute to the CTP site. UTP-binding positions include 189-194 (KTKIAQ) and Lys-225. A Glutamine amidotransferase type-1 domain is found at 293–535 (KIALVGKYVE…FIRVAVENSK (243 aa)). Gly-355 is an L-glutamine binding site. The active-site Nucleophile; for glutamine hydrolysis is the Cys-382. L-glutamine is bound by residues 383–386 (LGMQ), Glu-406, and Arg-464. Residues His-509 and Glu-511 contribute to the active site.

This sequence belongs to the CTP synthase family. Homotetramer.

The enzyme catalyses UTP + L-glutamine + ATP + H2O = CTP + L-glutamate + ADP + phosphate + 2 H(+). The catalysed reaction is L-glutamine + H2O = L-glutamate + NH4(+). It carries out the reaction UTP + NH4(+) + ATP = CTP + ADP + phosphate + 2 H(+). It participates in pyrimidine metabolism; CTP biosynthesis via de novo pathway; CTP from UDP: step 2/2. Allosterically activated by GTP, when glutamine is the substrate; GTP has no effect on the reaction when ammonia is the substrate. The allosteric effector GTP functions by stabilizing the protein conformation that binds the tetrahedral intermediate(s) formed during glutamine hydrolysis. Inhibited by the product CTP, via allosteric rather than competitive inhibition. Functionally, catalyzes the ATP-dependent amination of UTP to CTP with either L-glutamine or ammonia as the source of nitrogen. Regulates intracellular CTP levels through interactions with the four ribonucleotide triphosphates. The polypeptide is CTP synthase (Lactococcus lactis subsp. lactis (strain IL1403) (Streptococcus lactis)).